Reading from the N-terminus, the 416-residue chain is Adipocyte plasma membrane-associated protein (416 aa).

The segment at 1 to 32 (MSEADGLRQRRPLRPQVVTDDDGQAPEAKDGS) is disordered. At S2 the chain carries N-acetylserine. At 2 to 40 (SEADGLRQRRPLRPQVVTDDDGQAPEAKDGSSFSGRVFR) the chain is on the cytoplasmic side. The residue at position 19 (T19) is a Phosphothreonine. Residues 41-61 (VTFLMLAVSLTVPLLGAMMLL) traverse the membrane as a helical; Signal-anchor for type II membrane protein segment. At 62-416 (ESPIDPQPLS…FLCRLSLQAV (355 aa)) the chain is on the extracellular side. N-linked (GlcNAc...) asparagine glycosylation is found at N160 and N196.

It belongs to the strictosidine synthase family. Liver, glomerular and tubular structures of the kidney, endothelial cells, arterial wall and pancreatic islets of Langerhans (at protein level). Found ubiquitously in adult as well as in embryonic tissues. In adult tissue, the highest expression is found in the liver, placenta and heart. Found on the cell surface of monocytes. In embryonic tissue, the highest expression levels is found in the liver and the kidney.

The protein localises to the membrane. Exhibits strong arylesterase activity with beta-naphthyl acetate and phenyl acetate. May play a role in adipocyte differentiation. The chain is Adipocyte plasma membrane-associated protein (APMAP) from Homo sapiens (Human).